The sequence spans 370 residues: Lysophosphatidic acid receptor 4 (370 aa).

The Extracellular portion of the chain corresponds to 1-43 (MGDRRFIDFQFQDLNSSLRPRLGNATANNTCIVDDSFKYNLNG). N-linked (GlcNAc...) asparagine glycans are attached at residues asparagine 15, asparagine 24, and asparagine 28. Residues 44 to 64 (AVYSVVFILGLITNSASLFVF) form a helical membrane-spanning segment. At 65-73 (CFRMKMRSE) the chain is on the cytoplasmic side. The helical transmembrane segment at 74–94 (TAIFITNLALSDLLFVCTLPF) threads the bilayer. Over 95–112 (KIFYNFNRHWPFGDTLCK) the chain is Extracellular. Cysteine 111 and cysteine 188 are oxidised to a cystine. The helical transmembrane segment at 113-133 (ISGTAFLTNIYGSMLFLTCIS) threads the bilayer. The Cytoplasmic portion of the chain corresponds to 134–155 (VDRFLAIVYPFRSRTIRTRRNS). The helical transmembrane segment at 156-176 (AIVCAGVWILVLSGGISASLF) threads the bilayer. Residues 177 to 203 (STTNVNNATTTCFEGFSKRVWKTYLSK) are Extracellular-facing. N-linked (GlcNAc...) asparagine glycosylation occurs at asparagine 183. Residues 204–224 (ITIFIEVVGFIIPLILNVSCS) traverse the membrane as a helical segment. The Cytoplasmic portion of the chain corresponds to 225–254 (SVVLRTLRKPATLSQIGTNKKKVLKMITVH). Residues 255 to 275 (MAVFVVCFVPYNSVLFLYALV) form a helical membrane-spanning segment. The Extracellular portion of the chain corresponds to 276–294 (RSQAITNCLLERFAKIMYP). Residues 295–315 (ITLCLATLNCCFDPFIYYFTL) form a helical membrane-spanning segment. Topologically, residues 316–370 (ESFQKSFYINTHIRMESLFKTETPLTPKPSLPAIQEEVSDQTTNNGGELMLESTF) are cytoplasmic.

The protein belongs to the G-protein coupled receptor 1 family.

The protein resides in the cell membrane. Receptor for lysophosphatidic acid (LPA), a mediator of diverse cellular activities. Transduces a signal by increasing the intracellular calcium ions and by stimulating adenylyl cyclase activity. The rank order of potency for agonists of this receptor is 1-oleoyl- &gt; 1-stearoyl- &gt; 1-palmitoyl- &gt; 1-myristoyl- &gt; 1-alkyl- &gt; 1-alkenyl-LPA. The sequence is that of Lysophosphatidic acid receptor 4 (Lpar4) from Mus musculus (Mouse).